We begin with the raw amino-acid sequence, 402 residues long: NADH dehydrogenase [ubiquinone] 1 alpha subcomplex subunit 9, mitochondrial (402 aa).

A mitochondrion-targeting transit peptide spans 1-43; sequence MQVVSRRLVQRPLVGGASIYSSSSLRSLYGVSNHLNGTDNCRY.

Belongs to the complex I NDUFA9 subunit family. As to quaternary structure, complex I is composed of at least 49 different subunits. This a component of the hydrophobic protein fraction. It depends on FAD as a cofactor.

It is found in the mitochondrion matrix. In terms of biological role, accessory subunit of the mitochondrial membrane respiratory chain NADH dehydrogenase (Complex I), that is believed not to be involved in catalysis. Complex I functions in the transfer of electrons from NADH to the respiratory chain. The immediate electron acceptor for the enzyme is believed to be ubiquinone. The sequence is that of NADH dehydrogenase [ubiquinone] 1 alpha subcomplex subunit 9, mitochondrial from Arabidopsis thaliana (Mouse-ear cress).